The primary structure comprises 262 residues: 3-methyl-2-oxobutanoate hydroxymethyltransferase (262 aa).

Mg(2+) contacts are provided by aspartate 44 and aspartate 83. 3-methyl-2-oxobutanoate is bound by residues 44–45 (DS), aspartate 83, and lysine 113. Glutamate 115 contacts Mg(2+). The active-site Proton acceptor is glutamate 182.

This sequence belongs to the PanB family. In terms of assembly, homodecamer; pentamer of dimers. Mg(2+) is required as a cofactor.

The protein localises to the cytoplasm. The catalysed reaction is 3-methyl-2-oxobutanoate + (6R)-5,10-methylene-5,6,7,8-tetrahydrofolate + H2O = 2-dehydropantoate + (6S)-5,6,7,8-tetrahydrofolate. The protein operates within cofactor biosynthesis; (R)-pantothenate biosynthesis; (R)-pantoate from 3-methyl-2-oxobutanoate: step 1/2. Its function is as follows. Catalyzes the reversible reaction in which hydroxymethyl group from 5,10-methylenetetrahydrofolate is transferred onto alpha-ketoisovalerate to form ketopantoate. This chain is 3-methyl-2-oxobutanoate hydroxymethyltransferase, found in Picosynechococcus sp. (strain ATCC 27264 / PCC 7002 / PR-6) (Agmenellum quadruplicatum).